A 56-amino-acid chain; its full sequence is MSERKNSKSRRNYLVKCSCPNCTQESEHSFSRVQKGALLICPHCNKVFQTNLKAVA.

Residues Cys19, Cys22, Cys41, and Cys44 each coordinate Zn(2+).

Zn(2+) serves as cofactor.

The chain is Putative zinc-binding protein YnfU from Escherichia coli (strain K12).